Consider the following 311-residue polypeptide: T-cell acute lymphocytic leukemia protein 1 homolog (311 aa).

The span at 1-14 (MTMDRPPAPPPPSS) shows a compositional bias: pro residues. Residues 1–67 (MTMDRPPAPP…RPSPGPPAAA (67 aa)) form a disordered region. Residues 15-25 (DPRDARRHDPE) show a composition bias toward basic and acidic residues. The bHLH domain occupies 179-231 (VRRIFTNSRERWRQQNVNGAFAELRKLIPTHPPDKKLSKNEILRLAMKYINFL). The tract at residues 265–311 (SPNSSCGSSLDGAASPDSFTEEHDTLDSKHARNLHHAILPVEGSAQR) is disordered. Positions 284–294 (TEEHDTLDSKH) are enriched in basic and acidic residues.

As to quaternary structure, efficient DNA binding requires dimerization with another bHLH protein. Forms heterodimers with TCF3. In terms of processing, phosphorylated on serine residues.

The protein localises to the nucleus. In terms of biological role, implicated in the genesis of hemopoietic malignancies. It may play an important role in hemopoietic differentiation. In Gallus gallus (Chicken), this protein is T-cell acute lymphocytic leukemia protein 1 homolog (TAL1).